The primary structure comprises 347 residues: Protein pelota homolog (347 aa).

Belongs to the eukaryotic release factor 1 family. Pelota subfamily. Monomer. The cofactor is a divalent metal cation.

The protein localises to the cytoplasm. May function in recognizing stalled ribosomes, interact with stem-loop structures in stalled mRNA molecules, and effect endonucleolytic cleavage of the mRNA. May play a role in the release non-functional ribosomes and degradation of damaged mRNAs. Has endoribonuclease activity. The polypeptide is Protein pelota homolog (Methanothrix thermoacetophila (strain DSM 6194 / JCM 14653 / NBRC 101360 / PT) (Methanosaeta thermophila)).